Reading from the N-terminus, the 320-residue chain is Lipoyl synthase (320 aa).

Cys67, Cys72, Cys78, Cys93, Cys97, Cys100, and Ser307 together coordinate [4Fe-4S] cluster. A Radical SAM core domain is found at 79 to 296; sequence FNHGTATFMI…RDKAQAMGFE (218 aa).

This sequence belongs to the radical SAM superfamily. Lipoyl synthase family. The cofactor is [4Fe-4S] cluster.

It localises to the cytoplasm. The enzyme catalyses [[Fe-S] cluster scaffold protein carrying a second [4Fe-4S](2+) cluster] + N(6)-octanoyl-L-lysyl-[protein] + 2 oxidized [2Fe-2S]-[ferredoxin] + 2 S-adenosyl-L-methionine + 4 H(+) = [[Fe-S] cluster scaffold protein] + N(6)-[(R)-dihydrolipoyl]-L-lysyl-[protein] + 4 Fe(3+) + 2 hydrogen sulfide + 2 5'-deoxyadenosine + 2 L-methionine + 2 reduced [2Fe-2S]-[ferredoxin]. It functions in the pathway protein modification; protein lipoylation via endogenous pathway; protein N(6)-(lipoyl)lysine from octanoyl-[acyl-carrier-protein]: step 2/2. Functionally, catalyzes the radical-mediated insertion of two sulfur atoms into the C-6 and C-8 positions of the octanoyl moiety bound to the lipoyl domains of lipoate-dependent enzymes, thereby converting the octanoylated domains into lipoylated derivatives. This chain is Lipoyl synthase, found in Pasteurella multocida (strain Pm70).